We begin with the raw amino-acid sequence, 371 residues long: MAQNPNLAALSAAGVSVWLDDLSRDRLQTGNLTELINTRSVVGVTTNPSIFQAALSKGTAYDAQVNELAARGADVDATIRTVTTDDVRNACDLLAKEYEASDGVDGRVSIEVDPRLAHDTDKTILQAIELWKIVDRPNLLIKIPATMAGLPAISAVIAEGISVNVTLIFSVERHRLVMDAYLEGLEKAKEAGHDLSKIHSVASFFVSRVDTEIDARLEKIGSDEALALRGKAGVANARLAYAAYEEVFGSDRFAKLKADGARVQRPLWASTGVKNPEYSDTLYVTELVAPNTVNTMPEKTLEAVADHGEITGNTIAGTAASSQETFDKLAAIGIDLPDVFRVLEDEGVEKFEKSWQELLDATQGQLDAAKK.

An Isoglutamyl lysine isopeptide (Lys-Gln) (interchain with Q-Cter in protein Pup) cross-link involves residue lysine 132. Catalysis depends on lysine 142, which acts as the Schiff-base intermediate with substrate.

The protein belongs to the transaldolase family. Type 2 subfamily.

The protein resides in the cytoplasm. It catalyses the reaction D-sedoheptulose 7-phosphate + D-glyceraldehyde 3-phosphate = D-erythrose 4-phosphate + beta-D-fructose 6-phosphate. Its pathway is carbohydrate degradation; pentose phosphate pathway; D-glyceraldehyde 3-phosphate and beta-D-fructose 6-phosphate from D-ribose 5-phosphate and D-xylulose 5-phosphate (non-oxidative stage): step 2/3. Functionally, transaldolase is important for the balance of metabolites in the pentose-phosphate pathway. This is Transaldolase (tal) from Mycolicibacterium smegmatis (strain ATCC 700084 / mc(2)155) (Mycobacterium smegmatis).